Consider the following 343-residue polypeptide: Probable transcription factor MYB58 (343 aa).

Residues 1 to 30 are disordered; that stretch reads MARAPGGVRRRSGRRGAGGGGAGGGGEALR. The segment covering 15 to 27 has biased composition (gly residues); that stretch reads RGAGGGGAGGGGE. HTH myb-type domains lie at 26 to 78 and 79 to 134; these read GEAL…VNKL and RPNL…KRLA. 2 DNA-binding regions (H-T-H motif) span residues 54–77 and 107–130; these read WSSIRSKGLLPRTGKSCRLRWVNK and WARIATYLQGRTDNDVKNFWSTRQ. 3 disordered regions span residues 137 to 169, 219 to 238, and 307 to 343; these read LRGPLPAARPNKHNSGKGKAPSSSSLDSQTATF, PPADGEASSSNAAQSAPPPL, and DDLPPNMFDDAVDQPPPPPPPPPPPSPSPSPSRDDVL. Positions 157 to 169 are enriched in polar residues; the sequence is PSSSSLDSQTATF. Residues 320-336 are compositionally biased toward pro residues; the sequence is QPPPPPPPPPPPSPSPS.

The protein resides in the nucleus. Functionally, probable transcription factor. The sequence is that of Probable transcription factor MYB58 from Oryza sativa subsp. japonica (Rice).